Consider the following 841-residue polypeptide: pre-rRNA 2'-O-ribose RNA methyltransferase FTSJ3 (841 aa).

Positions 56, 58, 76, 92, and 117 each coordinate S-adenosyl-L-methionine. Lysine 157 functions as the Proton acceptor in the catalytic mechanism. The segment at 332–366 (ISLSSGEEDEGNEEDSTAGTTEQPSKEEEEEEQLN) is disordered. Residues serine 333, serine 335, serine 336, serine 347, and serine 356 each carry the phosphoserine modification. Residues 337–347 (GEEDEGNEEDS) show a composition bias toward acidic residues. Residues 356 to 404 (SKEEEEEEQLNQTLAEMKAQEVAELKRKKKKLLREQRKQRERVELKMDL) are a coiled coil. A Glycyl lysine isopeptide (Lys-Gly) (interchain with G-Cter in SUMO2) cross-link involves residue lysine 357. Arginine 389 is subject to Citrulline. The disordered stretch occupies residues 454-482 (VSDVEDDGDDTSLDSDLDPEELAGVRGHQ). Over residues 456-474 (DVEDDGDDTSLDSDLDPEE) the composition is skewed to acidic residues. Serine 547 is modified (phosphoserine). Threonine 567 carries the post-translational modification Phosphothreonine. Lysine 573 participates in a covalent cross-link: Glycyl lysine isopeptide (Lys-Gly) (interchain with G-Cter in SUMO2). Position 578 is a phosphoserine (serine 578). The segment at 579-654 (PLYQDEAPKG…IVPIEDPAKH (76 aa)) is disordered. Lysine 637 participates in a covalent cross-link: Glycyl lysine isopeptide (Lys-Gly) (interchain with G-Cter in SUMO2). Serine 638 is modified (phosphoserine). A Glycyl lysine isopeptide (Lys-Gly) (interchain with G-Cter in SUMO2) cross-link involves residue lysine 653. At serine 670 the chain carries Phosphoserine. Lysine 672 participates in a covalent cross-link: Glycyl lysine isopeptide (Lys-Gly) (interchain with G-Cter in SUMO2). A Phosphoserine modification is found at serine 682. Lysine 704 is covalently cross-linked (Glycyl lysine isopeptide (Lys-Gly) (interchain with G-Cter in SUMO2)). Positions 733 to 771 (IKKVAEAKARKKRRMLKRLEQTRKKAEAVVNTVDISERE) form a coiled coil. The residue at position 777 (arginine 777) is a Citrulline. A compositionally biased stretch (basic residues) spans 805 to 815 (VRRPAGVRGHF). A disordered region spans residues 805–841 (VRRPAGVRGHFKVVDSRMKKDQRAQQRKEQKKKHKRK). Residues 816-832 (KVVDSRMKKDQRAQQRK) are compositionally biased toward basic and acidic residues.

Belongs to the class I-like SAM-binding methyltransferase superfamily. RNA methyltransferase RlmE family. SPB1 subfamily. As to quaternary structure, interacts with NIP7. Post-translationally, citrullinated by PADI4.

It is found in the nucleus. The protein resides in the nucleolus. The enzyme catalyses a ribonucleotide in rRNA + S-adenosyl-L-methionine = a 2'-O-methylribonucleotide in rRNA + S-adenosyl-L-homocysteine + H(+). Its function is as follows. RNA 2'-O-methyltransferase involved in the processing of the 34S pre-rRNA to 18S rRNA and in 40S ribosomal subunit formation. This chain is pre-rRNA 2'-O-ribose RNA methyltransferase FTSJ3, found in Pongo abelii (Sumatran orangutan).